The following is a 290-amino-acid chain: ATP synthase gamma chain (290 aa).

Belongs to the ATPase gamma chain family. F-type ATPases have 2 components, CF(1) - the catalytic core - and CF(0) - the membrane proton channel. CF(1) has five subunits: alpha(3), beta(3), gamma(1), delta(1), epsilon(1). CF(0) has three main subunits: a, b and c.

The protein localises to the cell inner membrane. Produces ATP from ADP in the presence of a proton gradient across the membrane. The gamma chain is believed to be important in regulating ATPase activity and the flow of protons through the CF(0) complex. This Dictyoglomus thermophilum (strain ATCC 35947 / DSM 3960 / H-6-12) protein is ATP synthase gamma chain.